The following is a 212-amino-acid chain: Orotate phosphoribosyltransferase (212 aa).

5-phospho-alpha-D-ribose 1-diphosphate is bound by residues Arg-97, Lys-101, His-103, and 123 to 131 (DDLISTGGS). Ser-127 contacts orotate.

This sequence belongs to the purine/pyrimidine phosphoribosyltransferase family. PyrE subfamily. Homodimer. It depends on Mg(2+) as a cofactor.

It catalyses the reaction orotidine 5'-phosphate + diphosphate = orotate + 5-phospho-alpha-D-ribose 1-diphosphate. It functions in the pathway pyrimidine metabolism; UMP biosynthesis via de novo pathway; UMP from orotate: step 1/2. Catalyzes the transfer of a ribosyl phosphate group from 5-phosphoribose 1-diphosphate to orotate, leading to the formation of orotidine monophosphate (OMP). This Lactiplantibacillus plantarum (strain ATCC BAA-793 / NCIMB 8826 / WCFS1) (Lactobacillus plantarum) protein is Orotate phosphoribosyltransferase.